The primary structure comprises 517 residues: Probable G-protein coupled receptor Mth-like 4 (517 aa).

The first 18 residues, 1–18 (MRILLIAVLFLLMPKSNA), serve as a signal peptide directing secretion. The Extracellular segment spans residues 19–212 (EIPGCDFFDT…LSSEHSRTWK (194 aa)). 5 disulfides stabilise this stretch: cysteine 23–cysteine 77, cysteine 79–cysteine 84, cysteine 88–cysteine 183, cysteine 89–cysteine 100, and cysteine 145–cysteine 201. N-linked (GlcNAc...) asparagine glycosylation is present at asparagine 39. 2 N-linked (GlcNAc...) asparagine glycosylation sites follow: asparagine 117 and asparagine 165. A helical membrane pass occupies residues 213-233 (TVAIVISLICIILTISVYLYV). Topologically, residues 234–242 (EKLRNLHGK) are cytoplasmic. The helical transmembrane segment at 243–263 (CFICYLASLFLGYFFLVLNVW) threads the bilayer. The Extracellular portion of the chain corresponds to 264–272 (KYSSGFCVT). Residues 273–293 (AGFLGYFSVMAAFFWLSVIGI) form a helical membrane-spanning segment. The Cytoplasmic segment spans residues 294-319 (HLRIKFSLASNCLHRLLPENPFRAYN). Residues 320–340 (LYAWGIPLIMTAITYTADQVV) traverse the membrane as a helical segment. Topologically, residues 341–363 (KNEKLRPRVGVGKNCWIYTGDMT) are extracellular. A helical transmembrane segment spans residues 364-384 (VMIYFYGPMLLLIAFNIIMFV). At 385-414 (LSAIYIYNIKKNVKGLVHKQQTNQQINDQQ) the chain is on the cytoplasmic side. A helical transmembrane segment spans residues 415–435 (MFAIFLRLFILMGLSWSFEIL). Over 436-459 (SFLLTKQQAWARALMVADYFNWSQ) the chain is Extracellular. Residue asparagine 456 is glycosylated (N-linked (GlcNAc...) asparagine). The chain crosses the membrane as a helical span at residues 460–480 (GTIIFVLFILKPSILKLIIAG). Residues 481–517 (GRQNLPGSHHNSRSKAARYNSTHTACEGSIADPNAYC) are Cytoplasmic-facing.

It belongs to the G-protein coupled receptor 2 family. Mth subfamily.

It is found in the cell membrane. In Drosophila melanogaster (Fruit fly), this protein is Probable G-protein coupled receptor Mth-like 4 (mthl4).